Reading from the N-terminus, the 145-residue chain is Peptide methionine sulfoxide reductase MsrB (145 aa).

The region spanning 6–129 (KNERLQQLTD…NSAALRFIPV (124 aa)) is the MsrB domain. The active-site Nucleophile is Cys-118.

This sequence belongs to the MsrB Met sulfoxide reductase family.

The catalysed reaction is L-methionyl-[protein] + [thioredoxin]-disulfide + H2O = L-methionyl-(R)-S-oxide-[protein] + [thioredoxin]-dithiol. This chain is Peptide methionine sulfoxide reductase MsrB, found in Listeria monocytogenes serovar 1/2a (strain ATCC BAA-679 / EGD-e).